Here is a 622-residue protein sequence, read N- to C-terminus: Low affinity potassium transport system protein Kup (622 aa).

12 helical membrane passes run 9–29 (LPAITLAAIGVVYGDIGTSPL), 49–69 (VFGFLSLIFWLLIFVVSIKYL), 103–123 (VIMGLIGGSFFYGEVVITPAI), 137–157 (PQLDTWIVPLSIIVLTLLFMI), 165–185 (VGKLFAPIMLTWFLILAGLGL), 213–233 (VSFIALGAVVLSITGGEALYA), 247–267 (WFTVVLPSLTLNYFGQGALLL), 276–296 (PFFLLAPDWALIPLLIIAALA), 337–357 (IYIPFVNWMLYVAVVIVIVSF), 363–383 (LAAAYGIAVTGTMVLTSILST), 396–416 (FVALILIAFLCVDIPLFTANL), and 419–439 (LLSGGWLPLSLGTVMFIVMTT).

Belongs to the HAK/KUP transporter (TC 2.A.72) family.

It localises to the cell inner membrane. The catalysed reaction is K(+)(in) + H(+)(in) = K(+)(out) + H(+)(out). Functionally, responsible for the low-affinity transport of potassium into the cell. Likely operates as a K(+):H(+) symporter. This chain is Low affinity potassium transport system protein Kup, found in Escherichia coli O157:H7 (strain EC4115 / EHEC).